We begin with the raw amino-acid sequence, 607 residues long: Acyl-coenzyme A thioesterase 11 (607 aa).

Residues methionine 1 to leucine 13 constitute a mitochondrion transit peptide. Phosphoserine is present on residues serine 15 and serine 25. The HotDog ACOT-type 1 domain maps to asparagine 43–isoleucine 155. CoA is bound by residues threonine 91–serine 93, asparagine 120–serine 122, arginine 181, and histidine 271–arginine 273. The region spanning glutamate 216–aspartate 329 is the HotDog ACOT-type 2 domain. The 211-residue stretch at leucine 375 to histidine 585 folds into the START domain.

In terms of tissue distribution, isoform 1 is predominantly expressed in skeletal muscle, liver, testis, stomach, spleen, lung and brain. Isoform 2 is predominantly expressed in kidney, uterus, hibernoma and white adipose tissue.

It is found in the mitochondrion matrix. Its subcellular location is the cytoplasm. The catalysed reaction is hexadecanoyl-CoA + H2O = hexadecanoate + CoA + H(+). The enzyme catalyses tetradecanoyl-CoA + H2O = tetradecanoate + CoA + H(+). It carries out the reaction dodecanoyl-CoA + H2O = dodecanoate + CoA + H(+). It catalyses the reaction butanoyl-CoA + H2O = butanoate + CoA + H(+). The protein operates within lipid metabolism; fatty acid metabolism. In terms of biological role, has an acyl-CoA thioesterase activity with a preference for the long chain fatty acyl-CoA thioesters hexadecanoyl-CoA/palmitoyl-CoA and tetradecanoyl-CoA/myristoyl-CoA which are the main substrates in the mitochondrial beta-oxidation pathway. This chain is Acyl-coenzyme A thioesterase 11 (ACOT11), found in Homo sapiens (Human).